A 651-amino-acid polypeptide reads, in one-letter code: A-type voltage-gated potassium channel KCND1 (651 aa).

Residues 1–183 are Cytoplasmic-facing; that stretch reads MAAGVATWLP…RAFENPHTST (183 aa). The segment at 2–20 is interaction with KCNIP1, KCNIP2, and other family members; sequence AAGVATWLPFARAAAVGWL. Zn(2+) contacts are provided by His-104, Cys-131, and Cys-132. The interval 144–164 is disordered; the sequence is AERLAEDEEAEQAGEGPALPA. The chain crosses the membrane as a helical span at residues 184–205; the sequence is AALVFYYVTGFFIAVSVIANVV. Over 206–230 the chain is Extracellular; that stretch reads ETIPCRGTPRWPSKEQSCGDRFPTA. The chain crosses the membrane as a helical span at residues 231 to 252; that stretch reads FFCMDTACVLIFTGEYLLRLFA. Residues 253 to 263 are Cytoplasmic-facing; that stretch reads APSRCRFLRSV. A helical membrane pass occupies residues 264–284; sequence MSLIDVVAILPYYIGLFVPKN. Residues 285–287 lie on the Extracellular side of the membrane; it reads DDV. A helical; Voltage-sensor transmembrane segment spans residues 288-308; sequence SGAFVTLRVFRVFRIFKFSRH. Residues 309 to 323 lie on the Cytoplasmic side of the membrane; it reads SQGLRILGYTLKSCA. The segment at 310 to 323 is S4-S5 linker; sequence QGLRILGYTLKSCA. A helical membrane pass occupies residues 324–345; the sequence is SELGFLLFSLTMAIIIFATVMF. The Extracellular segment spans residues 346–359; that stretch reads YAEKGTSKTNFTSI. N-linked (GlcNAc...) asparagine glycosylation occurs at Asn-355. Residues 360–371 constitute an intramembrane region (helical); sequence PAAFWYTIVTMT. The Selectivity filter motif lies at 372 to 377; it reads TLGYGD. An intramembrane segment occupies 372 to 379; the sequence is TLGYGDMV. At 380 to 386 the chain is on the extracellular side; that stretch reads PSTIAGK. Residues 387 to 415 form a helical membrane-spanning segment; it reads IFGSICSLSGVLVIALPVPVIVSNFSRIY. At 416–651 the chain is on the cytoplasmic side; the sequence is HQNQRADKRR…LPETVKISSL (236 aa). Ser-458 is subject to Phosphoserine. The required for dendritic targeting stretch occupies residues 474 to 489; that stretch reads FEQQHHHLLHCLEKTT. Ser-555 bears the Phosphoserine mark. 2 disordered regions span residues 566–585 and 601–651; these read RRSPAPQTRSSLNAKPHDSL and IPTP…ISSL. A compositionally biased stretch (polar residues) spans 626–637; that stretch reads TPNTTLRNSSLG.

It belongs to the potassium channel family. D (Shal) (TC 1.A.1.2) subfamily. Kv4.1/KCND1 sub-subfamily. Component of heteromultimeric potassium channels. Identified in potassium channel complexes containing KCND1, KCND2, KCND3, KCNIP1, KCNIP2, KCNIP3, KCNIP4, DPP6 and DPP10.

Its subcellular location is the cell membrane. The enzyme catalyses K(+)(in) = K(+)(out). Functionally, A-type voltage-gated potassium channel that mediates transmembrane potassium transport in excitable membranes in the brain. Mediates A-type current I(SA) in suprachiasmatic nucleus (SCN) neurons. Exhibits a low-threshold A-type current with a hyperpolarized steady-state inactivation midpoint and the recovery process was steeply voltage-dependent, with recovery being markedly faster at more negative potentials. May regulates repetitive firing rates in the suprachiasmatic nucleus (SCN) neurons and circadian rhythms in neuronal excitability and behavior. Contributes to the regulation of the circadian rhythm of action potential firing in suprachiasmatic nucleus neurons, which regulates the circadian rhythm of locomotor activity. The regulatory subunit KCNIP1 modulates the kinetics of channel inactivation, increases the current amplitudes and accelerates recovery from inactivation, shifts activation in a depolarizing direction. The regulatory subunit DPP10 decreases the voltage sensitivity of the inactivation channel gating. This is A-type voltage-gated potassium channel KCND1 from Mus musculus (Mouse).